The following is a 116-amino-acid chain: Calcium-regulated OB-fold protein CarO (116 aa).

The signal sequence occupies residues 1 to 21 (MKLRHLPLIAAIGLFSTVTLA).

The protein resides in the periplasm. Functionally, plays a role in intracellular Ca(2+) homeostasis. Involved in cell protection against oxidative stress in strain 25W. This is Calcium-regulated OB-fold protein CarO from Pseudomonas aeruginosa (strain ATCC 15692 / DSM 22644 / CIP 104116 / JCM 14847 / LMG 12228 / 1C / PRS 101 / PAO1).